The primary structure comprises 446 residues: ATP-dependent protease ATPase subunit HslU (446 aa).

ATP-binding positions include I18, 60-65, D259, E324, and R396; that span reads GVGKTE.

It belongs to the ClpX chaperone family. HslU subfamily. A double ring-shaped homohexamer of HslV is capped on each side by a ring-shaped HslU homohexamer. The assembly of the HslU/HslV complex is dependent on binding of ATP.

The protein localises to the cytoplasm. ATPase subunit of a proteasome-like degradation complex; this subunit has chaperone activity. The binding of ATP and its subsequent hydrolysis by HslU are essential for unfolding of protein substrates subsequently hydrolyzed by HslV. HslU recognizes the N-terminal part of its protein substrates and unfolds these before they are guided to HslV for hydrolysis. The sequence is that of ATP-dependent protease ATPase subunit HslU from Vibrio atlanticus (strain LGP32) (Vibrio splendidus (strain Mel32)).